A 187-amino-acid chain; its full sequence is tRNA (cytidine(56)-2'-O)-methyltransferase (187 aa).

S-adenosyl-L-methionine is bound by residues L94 and 120–124 (GAEKV).

Belongs to the aTrm56 family. In terms of assembly, homodimer.

It localises to the cytoplasm. It catalyses the reaction cytidine(56) in tRNA + S-adenosyl-L-methionine = 2'-O-methylcytidine(56) in tRNA + S-adenosyl-L-homocysteine + H(+). In terms of biological role, specifically catalyzes the AdoMet-dependent 2'-O-ribose methylation of cytidine at position 56 in tRNAs. The protein is tRNA (cytidine(56)-2'-O)-methyltransferase of Hyperthermus butylicus (strain DSM 5456 / JCM 9403 / PLM1-5).